The following is a 1317-amino-acid chain: Kinesin-like protein KIF16B (1317 aa).

Residues 3-358 form the Kinesin motor domain; that stretch reads SVKVAVRVRP…LRYANRAKNI (356 aa). 102–109 is an ATP binding site; the sequence is GQTGSGKS. The stretch at 370–425 forms a coiled coil; sequence VKLIRELRAEIARLKTLLAQGNQIALLDSPTALSMEEKLQQNEARVQELTKEWTNK. A Phosphoserine modification is found at Ser-398. The FHA domain maps to 478–529; it reads TYVGRDDASTEQDIVLHGLDLESEHCIFENIGGTVTLIPLSGSQCSVNGVQI. The residue at position 577 (Thr-577) is a Phosphothreonine. At Ser-582 the chain carries Phosphoserine. 2 coiled-coil regions span residues 595–882 and 936–1087; these read GLEF…DESV and LSLD…VQKD. Residues 1036 to 1048 are compositionally biased toward polar residues; that stretch reads LASLNSGSREQSG. The segment at 1036–1057 is disordered; it reads LASLNSGSREQSGLQASLEAEQ. Phosphoserine is present on Ser-1052. Positions 1182 to 1296 constitute a PX domain; sequence DPIKISIPRY…KVGLTLSKHT (115 aa).

This sequence belongs to the TRAFAC class myosin-kinesin ATPase superfamily. Kinesin family. In terms of assembly, interacts with RAB14. Interacts with PTPN21. In terms of tissue distribution, primarily expressed in brain. Also present in kidney, liver, intestine, placenta, leukocytes, heart and skeletal muscle (at protein level).

The protein resides in the cytoplasm. The protein localises to the cytoskeleton. Its subcellular location is the early endosome membrane. It is found in the spindle. Plus end-directed microtubule-dependent motor protein involved in endosome transport and receptor recycling and degradation. Regulates the plus end motility of early endosomes and the balance between recycling and degradation of receptors such as EGF receptor (EGFR) and FGF receptor (FGFR). Regulates the Golgi to endosome transport of FGFR-containing vesicles during early development, a key process for developing basement membrane and epiblast and primitive endoderm lineages during early postimplantation development. The chain is Kinesin-like protein KIF16B (KIF16B) from Homo sapiens (Human).